Reading from the N-terminus, the 70-residue chain is ATP synthase subunit c (70 aa).

Transmembrane regions (helical) follow at residues 1–21 (MNFL…SYGN) and 47–67 (FIGV…SFLI).

It belongs to the ATPase C chain family. F-type ATPases have 2 components, F(1) - the catalytic core - and F(0) - the membrane proton channel. F(1) has five subunits: alpha(3), beta(3), gamma(1), delta(1), epsilon(1). F(0) has three main subunits: a(1), b(2) and c(10-14). The alpha and beta chains form an alternating ring which encloses part of the gamma chain. F(1) is attached to F(0) by a central stalk formed by the gamma and epsilon chains, while a peripheral stalk is formed by the delta and b chains.

The protein resides in the cell membrane. F(1)F(0) ATP synthase produces ATP from ADP in the presence of a proton or sodium gradient. F-type ATPases consist of two structural domains, F(1) containing the extramembraneous catalytic core and F(0) containing the membrane proton channel, linked together by a central stalk and a peripheral stalk. During catalysis, ATP synthesis in the catalytic domain of F(1) is coupled via a rotary mechanism of the central stalk subunits to proton translocation. Functionally, key component of the F(0) channel; it plays a direct role in translocation across the membrane. A homomeric c-ring of between 10-14 subunits forms the central stalk rotor element with the F(1) delta and epsilon subunits. In Latilactobacillus sakei subsp. sakei (strain 23K) (Lactobacillus sakei subsp. sakei), this protein is ATP synthase subunit c.